Reading from the N-terminus, the 1000-residue chain is C-module-binding factor A (1000 aa).

Positions 113 to 280 (PREWQEYLSH…ISYFSSLPHT (168 aa)) constitute a JmjC domain. The PHD-type; atypical zinc-finger motif lies at 489–544 (KIKCHRCEKRFKKFSIIFCTNCNARFCEQCVVNTFGQNFQVLMKRNEWECFCCKGL). The RING-type; degenerate zinc-finger motif lies at 492–542 (CHRCEKRFKKFSIIFCTNCNARFCEQCVVNTFGQNFQVLMKRNEWECFCCK). 2 disordered regions span residues 561 to 647 (RILN…SSYS) and 660 to 818 (SYGS…KNLK). Composition is skewed to low complexity over residues 574–647 (NNNN…SSYS), 660–683 (SYGS…NNNN), 700–710 (SSSSGSGSSNS), 732–751 (NNNN…NNHH), and 760–789 (NNNN…STST). Residues 805–818 (DNDKPKGRPPKNLK) are compositionally biased toward basic and acidic residues. A DNA-binding region (a.T hook) is located at residues 810 to 818 (KGRPPKNLK).

Monomer.

It localises to the nucleus. Functionally, transcriptional regulator involved in phagocytosis and pinocytosis. Both activates and represses transcription. Regulates expression of acaA, carA, pkaC, csaA, cotB and lagC. Promotes amplification of the tRNA gene-associated retrotransposon TRE5-A, a mobile genetic element formerly called as Dictyostelium repetitive element (DRE). Suppresses agnC and agnE encoding argonaute proteins which are part of a RNA interference pathway controlling TRE5-A amplification. Required for amplification of both sense and antisense RNA transcripts, but does not activate their promoters found in A-module and C-module of the TRE5-A, respectively. Nevertheless, binds to distinct DNA sequences containing A and T stretches within the C-module in vitro. The sequence is that of C-module-binding factor A from Dictyostelium discoideum (Social amoeba).